A 257-amino-acid chain; its full sequence is uncharacterized protein (257 aa).

2 disordered regions span residues 86–119 (SDEE…RPLS) and 182–206 (STPL…TDGQ). The segment covering 196 to 206 (PTPTSQLTDGQ) has biased composition (polar residues).

This is an uncharacterized protein from Invertebrate iridescent virus 3 (IIV-3).